Here is a 178-residue protein sequence, read N- to C-terminus: Ribosome maturation factor RimM (178 aa).

The 74-residue stretch at 104 to 177 (SDEYYFYEVI…KIVVKLPEWL (74 aa)) folds into the PRC barrel domain.

The protein belongs to the RimM family. As to quaternary structure, binds ribosomal protein uS19.

The protein resides in the cytoplasm. An accessory protein needed during the final step in the assembly of 30S ribosomal subunit, possibly for assembly of the head region. Essential for efficient processing of 16S rRNA. May be needed both before and after RbfA during the maturation of 16S rRNA. It has affinity for free ribosomal 30S subunits but not for 70S ribosomes. The sequence is that of Ribosome maturation factor RimM from Thermosipho melanesiensis (strain DSM 12029 / CIP 104789 / BI429).